The sequence spans 82 residues: uncharacterized protein (82 aa).

This is an uncharacterized protein from Anabaena cylindrica.